Here is a 1050-residue protein sequence, read N- to C-terminus: RecBCD enzyme subunit RecB (1050 aa).

The UvrD-like helicase ATP-binding domain occupies 1 to 443 (MKPFNIFDSN…LQLVNNYRST (443 aa)). The interval 1–766 (MKPFNIFDSN…TNYVKLEGTQ (766 aa)) is DNA-binding and helicase activity, interacts with RecC. Residue 21–28 (ASAGTGKT) participates in ATP binding. Residues 458 to 701 (SPFLEIPGYL…KITTIHSSKG (244 aa)) form the UvrD-like helicase C-terminal domain. The nuclease activity, interacts with RecD and RecA stretch occupies residues 814–1050 (PKTIFSFSST…KAIQKCQAYH (237 aa)). Mg(2+) contacts are provided by His-859, Asp-945, and Asp-958. Asp-958 functions as the For nuclease activity in the catalytic mechanism.

This sequence belongs to the helicase family. UvrD subfamily. As to quaternary structure, heterotrimer of RecB, RecC and RecD. All subunits contribute to DNA-binding. Interacts with RecA. It depends on Mg(2+) as a cofactor.

The catalysed reaction is Exonucleolytic cleavage (in the presence of ATP) in either 5'- to 3'- or 3'- to 5'-direction to yield 5'-phosphooligonucleotides.. The enzyme catalyses Couples ATP hydrolysis with the unwinding of duplex DNA by translocating in the 3'-5' direction.. It catalyses the reaction ATP + H2O = ADP + phosphate + H(+). In terms of biological role, a helicase/nuclease that prepares dsDNA breaks (DSB) for recombinational DNA repair. Binds to DSBs and unwinds DNA via a highly rapid and processive ATP-dependent bidirectional helicase activity. Unwinds dsDNA until it encounters a Chi (crossover hotspot instigator) sequence from the 3' direction. Cuts ssDNA a few nucleotides 3' to the Chi site. The properties and activities of the enzyme are changed at Chi. The Chi-altered holoenzyme produces a long 3'-ssDNA overhang and facilitates RecA-binding to the ssDNA for homologous DNA recombination and repair. Holoenzyme degrades any linearized DNA that is unable to undergo homologous recombination. In the holoenzyme this subunit contributes ATPase, 3'-5' helicase, exonuclease activity and loads RecA onto ssDNA. The sequence is that of RecBCD enzyme subunit RecB from Chlamydia pneumoniae (Chlamydophila pneumoniae).